We begin with the raw amino-acid sequence, 512 residues long: ATP synthase subunit alpha 2 (512 aa).

Residue 169–176 (GDRQTGKT) participates in ATP binding.

It belongs to the ATPase alpha/beta chains family. In terms of assembly, F-type ATPases have 2 components, CF(1) - the catalytic core - and CF(0) - the membrane proton channel. CF(1) has five subunits: alpha(3), beta(3), gamma(1), delta(1), epsilon(1). CF(0) has three main subunits: a(1), b(2) and c(9-12). The alpha and beta chains form an alternating ring which encloses part of the gamma chain. CF(1) is attached to CF(0) by a central stalk formed by the gamma and epsilon chains, while a peripheral stalk is formed by the delta and b chains.

It localises to the cell inner membrane. It catalyses the reaction ATP + H2O + 4 H(+)(in) = ADP + phosphate + 5 H(+)(out). Its function is as follows. Produces ATP from ADP in the presence of a proton gradient across the membrane. The alpha chain is a regulatory subunit. The sequence is that of ATP synthase subunit alpha 2 from Vibrio campbellii (strain ATCC BAA-1116).